The chain runs to 220 residues: Probable septum site-determining protein MinC (220 aa).

This sequence belongs to the MinC family. As to quaternary structure, interacts with MinD and FtsZ.

Its function is as follows. Cell division inhibitor that blocks the formation of polar Z ring septums. Rapidly oscillates between the poles of the cell to destabilize FtsZ filaments that have formed before they mature into polar Z rings. Prevents FtsZ polymerization. In Vibrio atlanticus (strain LGP32) (Vibrio splendidus (strain Mel32)), this protein is Probable septum site-determining protein MinC.